Reading from the N-terminus, the 109-residue chain is Spermidine export protein MdtI (109 aa).

4 helical membrane-spanning segments follow: residues 6 to 26 (WIHA…NVFL), 36 to 56 (VYGI…SQAV), 64 to 84 (AYAL…WVLF), and 88 to 108 (LNNK…LIKL).

Belongs to the drug/metabolite transporter (DMT) superfamily. Small multidrug resistance (SMR) (TC 2.A.7.1) family. MdtI subfamily. As to quaternary structure, forms a complex with MdtJ.

Its subcellular location is the cell inner membrane. In terms of biological role, catalyzes the excretion of spermidine. This chain is Spermidine export protein MdtI, found in Klebsiella pneumoniae (strain 342).